Here is a 353-residue protein sequence, read N- to C-terminus: Nicotinate-nucleotide--dimethylbenzimidazole phosphoribosyltransferase (353 aa).

Residue E318 is the Proton acceptor of the active site.

Belongs to the CobT family.

The catalysed reaction is 5,6-dimethylbenzimidazole + nicotinate beta-D-ribonucleotide = alpha-ribazole 5'-phosphate + nicotinate + H(+). It functions in the pathway nucleoside biosynthesis; alpha-ribazole biosynthesis; alpha-ribazole from 5,6-dimethylbenzimidazole: step 1/2. Catalyzes the synthesis of alpha-ribazole-5'-phosphate from nicotinate mononucleotide (NAMN) and 5,6-dimethylbenzimidazole (DMB). This is Nicotinate-nucleotide--dimethylbenzimidazole phosphoribosyltransferase from Roseiflexus castenholzii (strain DSM 13941 / HLO8).